The primary structure comprises 382 residues: Carbamoyl phosphate synthase small chain (382 aa).

The tract at residues 1 to 189 (MIKSALLVLE…GLPEAKKEDE (189 aa)) is CPSase. L-glutamine is bound by residues Ser47, Gly241, and Gly243. The Glutamine amidotransferase type-1 domain maps to 193 to 380 (HVVAYDFGAK…IELIEQYRKT (188 aa)). Catalysis depends on Cys269, which acts as the Nucleophile. L-glutamine contacts are provided by Leu270, Gln273, Asn311, Gly313, and Phe314. Catalysis depends on residues His353 and Glu355.

The protein belongs to the CarA family. As to quaternary structure, composed of two chains; the small (or glutamine) chain promotes the hydrolysis of glutamine to ammonia, which is used by the large (or ammonia) chain to synthesize carbamoyl phosphate. Tetramer of heterodimers (alpha,beta)4.

It carries out the reaction hydrogencarbonate + L-glutamine + 2 ATP + H2O = carbamoyl phosphate + L-glutamate + 2 ADP + phosphate + 2 H(+). The enzyme catalyses L-glutamine + H2O = L-glutamate + NH4(+). It functions in the pathway amino-acid biosynthesis; L-arginine biosynthesis; carbamoyl phosphate from bicarbonate: step 1/1. Its pathway is pyrimidine metabolism; UMP biosynthesis via de novo pathway; (S)-dihydroorotate from bicarbonate: step 1/3. Small subunit of the glutamine-dependent carbamoyl phosphate synthetase (CPSase). CPSase catalyzes the formation of carbamoyl phosphate from the ammonia moiety of glutamine, carbonate, and phosphate donated by ATP, constituting the first step of 2 biosynthetic pathways, one leading to arginine and/or urea and the other to pyrimidine nucleotides. The small subunit (glutamine amidotransferase) binds and cleaves glutamine to supply the large subunit with the substrate ammonia. This chain is Carbamoyl phosphate synthase small chain, found in Escherichia coli O157:H7.